Consider the following 173-residue polypeptide: NADH-ubiquinone oxidoreductase chain 6 (173 aa).

5 helical membrane-spanning segments follow: residues 1–21, 25–45, 53–73, 87–107, and 139–159; these read MAYIMLTLLIGMVLGVISVAS, PYFAALGLVLVAGVGCVVLMG, LVLFLIYLGGMLVVFAYCAAL, VLGSVLGYLLLVVGAGSWFWG, and LGGGLLVVSAWVLLLTLLVVL.

The protein belongs to the complex I subunit 6 family.

The protein localises to the mitochondrion membrane. It carries out the reaction a ubiquinone + NADH + 5 H(+)(in) = a ubiquinol + NAD(+) + 4 H(+)(out). Its function is as follows. Core subunit of the mitochondrial membrane respiratory chain NADH dehydrogenase (Complex I) that is believed to belong to the minimal assembly required for catalysis. Complex I functions in the transfer of electrons from NADH to the respiratory chain. The immediate electron acceptor for the enzyme is believed to be ubiquinone. The polypeptide is NADH-ubiquinone oxidoreductase chain 6 (MT-ND6) (Gadus morhua (Atlantic cod)).